The primary structure comprises 683 residues: 1,4-alpha-glucan-branching enzyme (683 aa).

Positions 92 and 127 each coordinate (1,4-alpha-D-glucosyl)n. Aspartate 342 functions as the Nucleophile in the catalytic mechanism. Glutamate 397 acts as the Proton donor in catalysis.

It belongs to the glycosyl hydrolase 13 family. GlgB subfamily.

The protein localises to the cytoplasm. The catalysed reaction is Transfers a segment of a (1-&gt;4)-alpha-D-glucan chain to a primary hydroxy group in a similar glucan chain.. Its pathway is glycan biosynthesis; glycogen biosynthesis. Its function is as follows. Glycogen-branching enzyme participates in the glycogen biosynthetic process along with glycogenin and glycogen synthase. Generates alpha-1,6-glucosidic branches from alpha-1,4-linked glucose chains, to increase solubility of the glycogen polymer. This chain is 1,4-alpha-glucan-branching enzyme (GLC3), found in Rhizophagus irregularis (strain DAOM 181602 / DAOM 197198 / MUCL 43194) (Arbuscular mycorrhizal fungus).